The following is a 175-amino-acid chain: uncharacterized protein (175 aa).

Its subcellular location is the cytoplasm. The protein resides in the nucleus. This is an uncharacterized protein from Schizosaccharomyces pombe (strain 972 / ATCC 24843) (Fission yeast).